The primary structure comprises 393 residues: Methylthioribose kinase (393 aa).

Residues N38, K53, and 107 to 109 (EDL) each bind ATP. D225 provides a ligand contact to substrate. Position 242 to 244 (242 to 244 (DPE)) interacts with ATP. R332 provides a ligand contact to substrate.

It belongs to the methylthioribose kinase family. In terms of assembly, homodimer.

It catalyses the reaction 5-(methylsulfanyl)-D-ribose + ATP = 5-(methylsulfanyl)-alpha-D-ribose 1-phosphate + ADP + H(+). It participates in amino-acid biosynthesis; L-methionine biosynthesis via salvage pathway; S-methyl-5-thio-alpha-D-ribose 1-phosphate from S-methyl-5'-thioadenosine (hydrolase route): step 2/2. Functionally, catalyzes the phosphorylation of methylthioribose into methylthioribose-1-phosphate. This chain is Methylthioribose kinase, found in Bacillus anthracis (strain A0248).